We begin with the raw amino-acid sequence, 120 residues long: Large ribosomal subunit protein bL19 (120 aa).

Belongs to the bacterial ribosomal protein bL19 family.

This protein is located at the 30S-50S ribosomal subunit interface and may play a role in the structure and function of the aminoacyl-tRNA binding site. This is Large ribosomal subunit protein bL19 (rplS) from Nostoc sp. (strain PCC 7120 / SAG 25.82 / UTEX 2576).